A 440-amino-acid chain; its full sequence is Chromosomal replication initiator protein DnaA (440 aa).

Positions 1-69 (MKERILQEIK…VKVVLGNDAT (69 aa)) are domain I, interacts with DnaA modulators. The segment at 69–96 (TFEITYEAFEPHSSYSEPLVKKRAVLLT) is domain II. Residues 97-313 (PLNPDYTFEN…GAIIKLLVYK (217 aa)) form a domain III, AAA+ region region. 4 residues coordinate ATP: glycine 140, glycine 142, lysine 143, and threonine 144. Residues 314 to 440 (ETTGKEVDLR…GEISKRALSG (127 aa)) are domain IV, binds dsDNA.

It belongs to the DnaA family. As to quaternary structure, oligomerizes as a right-handed, spiral filament on DNA at oriC.

Its subcellular location is the cytoplasm. Plays an essential role in the initiation and regulation of chromosomal replication. ATP-DnaA binds to the origin of replication (oriC) to initiate formation of the DNA replication initiation complex once per cell cycle. Binds the DnaA box (a 9 base pair repeat at the origin) and separates the double-stranded (ds)DNA. Forms a right-handed helical filament on oriC DNA; dsDNA binds to the exterior of the filament while single-stranded (ss)DNA is stabiized in the filament's interior. The ATP-DnaA-oriC complex binds and stabilizes one strand of the AT-rich DNA unwinding element (DUE), permitting loading of DNA polymerase. After initiation quickly degrades to an ADP-DnaA complex that is not apt for DNA replication. Binds acidic phospholipids. This Thermotoga petrophila (strain ATCC BAA-488 / DSM 13995 / JCM 10881 / RKU-1) protein is Chromosomal replication initiator protein DnaA.